Here is a 597-residue protein sequence, read N- to C-terminus: NADH-quinone oxidoreductase subunit C/D (597 aa).

The interval 1-188 (MKKEIKRDDV…DPYVLNKYKE (188 aa)) is NADH dehydrogenase I subunit C. The NADH dehydrogenase I subunit D stretch occupies residues 211 to 597 (KYMFLNLGPN…IDFVMSDVDR (387 aa)).

It in the N-terminal section; belongs to the complex I 30 kDa subunit family. The protein in the C-terminal section; belongs to the complex I 49 kDa subunit family. NDH-1 is composed of 13 different subunits. Subunits NuoB, CD, E, F, and G constitute the peripheral sector of the complex.

The protein resides in the cell inner membrane. The catalysed reaction is a quinone + NADH + 5 H(+)(in) = a quinol + NAD(+) + 4 H(+)(out). NDH-1 shuttles electrons from NADH, via FMN and iron-sulfur (Fe-S) centers, to quinones in the respiratory chain. The immediate electron acceptor for the enzyme in this species is believed to be ubiquinone. Couples the redox reaction to proton translocation (for every two electrons transferred, four hydrogen ions are translocated across the cytoplasmic membrane), and thus conserves the redox energy in a proton gradient. The chain is NADH-quinone oxidoreductase subunit C/D from Buchnera aphidicola subsp. Baizongia pistaciae (strain Bp).